We begin with the raw amino-acid sequence, 331 residues long: Phosphate acyltransferase (331 aa).

This sequence belongs to the PlsX family. As to quaternary structure, homodimer. Probably interacts with PlsY.

Its subcellular location is the cytoplasm. The enzyme catalyses a fatty acyl-[ACP] + phosphate = an acyl phosphate + holo-[ACP]. It participates in lipid metabolism; phospholipid metabolism. Its function is as follows. Catalyzes the reversible formation of acyl-phosphate (acyl-PO(4)) from acyl-[acyl-carrier-protein] (acyl-ACP). This enzyme utilizes acyl-ACP as fatty acyl donor, but not acyl-CoA. The chain is Phosphate acyltransferase from Lactococcus lactis subsp. lactis (strain IL1403) (Streptococcus lactis).